A 109-amino-acid chain; its full sequence is uncharacterized protein (109 aa).

A helical transmembrane segment spans residues 29 to 49 (ITIIITLVIIFIIFTLIILYF).

It localises to the membrane. This is an uncharacterized protein from Sputnik virophage.